Here is a 300-residue protein sequence, read N- to C-terminus: Bifunctional protein FolD (300 aa).

NADP(+)-binding positions include 172 to 174 (GRS), serine 206, and isoleucine 247.

Belongs to the tetrahydrofolate dehydrogenase/cyclohydrolase family. In terms of assembly, homodimer.

It carries out the reaction (6R)-5,10-methylene-5,6,7,8-tetrahydrofolate + NADP(+) = (6R)-5,10-methenyltetrahydrofolate + NADPH. It catalyses the reaction (6R)-5,10-methenyltetrahydrofolate + H2O = (6R)-10-formyltetrahydrofolate + H(+). It functions in the pathway one-carbon metabolism; tetrahydrofolate interconversion. Catalyzes the oxidation of 5,10-methylenetetrahydrofolate to 5,10-methenyltetrahydrofolate and then the hydrolysis of 5,10-methenyltetrahydrofolate to 10-formyltetrahydrofolate. This Rhodopirellula baltica (strain DSM 10527 / NCIMB 13988 / SH1) protein is Bifunctional protein FolD.